The chain runs to 753 residues: Serine/threonine-protein phosphatase with EF-hands 2 (753 aa).

An IQ domain is found at 21–46 (KAAALIQRWYRRYVARLEMRRRCTWS). Positions 128–540 (ATALVEAFRL…PHIVQYQANK (413 aa)) are catalytic. The Mn(2+) site is built by Asp-179, His-181, Asp-208, and Asn-240. The active-site Proton donor is the His-241. Position 292 (His-292) interacts with Mn(2+). Disordered regions lie at residues 318–382 (CKTR…GSLD) and 409–435 (VTGE…KPTQ). Positions 322-333 (QKSEKQMEEKRR) are enriched in basic and acidic residues. Positions 348–361 (LPESRSLPSSPLRL) are enriched in low complexity. Over residues 366-377 (AQKTSRSSSIPC) the composition is skewed to polar residues. His-488 lines the Mn(2+) pocket. EF-hand domains follow at residues 568–603 (AHSS…VLHL), 652–687 (RNRS…FSSH), and 692–727 (ITDD…VEKS). Residues Asp-665, Asp-667, Ser-669, Glu-676, Asp-705, Asn-707, Asp-709, His-711, and Glu-716 each contribute to the Ca(2+) site. A disordered region spans residues 732–753 (DASECPQATNAKDSGCSSPGAH). Positions 737–753 (PQATNAKDSGCSSPGAH) are enriched in polar residues.

The protein belongs to the PPP phosphatase family. Mn(2+) is required as a cofactor. As to expression, retinal specific.

The protein localises to the cytoplasm. The protein resides in the cell projection. Its subcellular location is the cilium. It localises to the photoreceptor outer segment. It is found in the photoreceptor inner segment. It carries out the reaction O-phospho-L-seryl-[protein] + H2O = L-seryl-[protein] + phosphate. The catalysed reaction is O-phospho-L-threonyl-[protein] + H2O = L-threonyl-[protein] + phosphate. Activated by calcium. Functionally, may play a role in phototransduction. May dephosphorylate photoactivated rhodopsin. May function as a calcium sensing regulator of ionic currents, energy production or synaptic transmission. The polypeptide is Serine/threonine-protein phosphatase with EF-hands 2 (PPEF2) (Homo sapiens (Human)).